The following is a 1136-amino-acid chain: MSASPPISAGDYLSAPEPDALKPAGPTPSQSRFQVDLVTESAGDGETTVGFDSSPPEYVAEPPPDGLRDSVSGGEEAKGRFRVVNFAASSPDAAPAETAQNGDTVMSEGSLHSSTGGQQHHHYDTHTNTYYLRTFGHNTIDAVPKIDFYRQTAAPLGEKLIRPTLSELHDELDKEPFEDGFANGEELTPAEESAAKDVSESKGVVKFGWIKGVLVRCMLNIWGVMLFIRMTWIVGQAGIAYSCIIVIMATVVTTITGCSTSAIATNGFVRGGGAYYLISRSLGPEFGGSIGLIFAFANAVAVAMYVVGFAETVVELLMDSGLLMIDQTNDIRVIGTITVILLLGISVAGMEWEAKAQIFLLVILITAIFNYFIGSFIAVDSKKKFGFFSYDAGILAENFGPDFRGQTFFSVFSIFFPAATGILAGANISGDLADPQMAIPKGTLLAILITGLVYVGVAISAGACIVRDATGIESNFTLISNCTDAACKYGYDFSSCRPTVEGEVSSCKFGLHNDFQVMSVVSGFSPLISAGIFSATLSSALASLVSAPKVFQALCKDNIYPGIAIFGKGYGKNNEPLRGYFLTFGIALAFILIAELNVIAPIISNFFLASYALINFSVFHASLANSPGWRPSFKYYNMWASLAGAILCCVVMFIINWWAALLTNVIVLSLYIYVSYKKPDVNWGSSTQALTYHQALTHSLQLCGVADHIKTFRPQCLVMTGAPNSRPAILHLVHAFTKNVGLMLCGHVRISSRRPNFKELNSDMLRYQRWLLNNNSKAFYTCVVAEDLRQGTQYMLQAAGLGRLRPNTLVIGFKNDWRTGDIKEVETYINLIHDAFDFQYGVVILRLREGLDISHIQGQDDSSGMKDVVVSVDISKDSDGDSSKPSSKATSVQNSPAVQKDEDDDGKAHTQPLLKKDKKSPTVPLNVADQRLLDASQQFQQKQGKGTVDVWWLFDDGGLTLLIPYLIANKKKWKDCKIRVFIGGKINRIDHDRRAMATLLSKFRIDFSDITVLGDINTKPKSEGLTEFAEMIEPYKLREDDMEQEAAEKLKSEEPWRITDNELELYKAKGNRQIRLNELLKEHSSTANLIVMSMPLARKGAVSSALYMAWLDTLSKDLPPILLVRGNHQSVLTFYS.

Disordered stretches follow at residues 1–73 (MSAS…SVSG) and 91–121 (PDAA…QQHH). Topologically, residues 1 to 208 (MSASPPISAG…SESKGVVKFG (208 aa)) are cytoplasmic. 5 positions are modified to phosphothreonine: Thr125, Thr129, Thr134, Thr139, and Thr152. The chain crosses the membrane as a discontinuously helical span at residues 209–234 (WIKGVLVRCMLNIWGVMLFIRMTWIV). A Na(+)-binding site is contributed by Leu219. K(+) is bound by residues Asn220 and Ile221. Na(+) is bound at residue Trp222. Chloride contacts are provided by Gly223, Val224, and Met225. Over 235–238 (GQAG) the chain is Extracellular. A helical transmembrane segment spans residues 239-261 (IAYSCIIVIMATVVTTITGCSTS). At 262-285 (AIATNGFVRGGGAYYLISRSLGPE) the chain is on the cytoplasmic side. Residues 286–314 (FGGSIGLIFAFANAVAVAMYVVGFAETVV) traverse the membrane as a helical segment. Position 294 (Phe294) interacts with chloride. Position 305 (Tyr305) interacts with K(+). Residues 315–327 (ELLMDSGLLMIDQ) are Extracellular-facing. 2 consecutive transmembrane segments (helical) span residues 328–351 (TNDI…AGME) and 352–376 (WEAK…IGSF). At 377 to 407 (IAVDSKKKFGFFSYDAGILAENFGPDFRGQT) the chain is on the extracellular side. A discontinuously helical membrane pass occupies residues 408–427 (FFSVFSIFFPAATGILAGAN). 3 residues coordinate K(+): Pro417, Ala418, and Thr420. Chloride-binding residues include Pro417 and Ala418. Chloride contacts are provided by Gly421 and Ile422. Residues 428–438 (ISGDLADPQMA) are Cytoplasmic-facing. Residues 439 to 462 (IPKGTLLAILITGLVYVGVAISAG) form a helical membrane-spanning segment. The Extracellular segment spans residues 463–523 (ACIVRDATGI…DFQVMSVVSG (61 aa)). Asn475 and Asn481 each carry an N-linked (GlcNAc...) asparagine glycan. An intrachain disulfide couples Cys496 to Cys507. The chain crosses the membrane as a helical span at residues 524 to 551 (FSPLISAGIFSATLSSALASLVSAPKVF). Na(+)-binding residues include Ala535, Ser538, and Ser539. The Cytoplasmic portion of the chain corresponds to 552 to 576 (QALCKDNIYPGIAIFGKGYGKNNEP). The next 2 membrane-spanning stretches (helical) occupy residues 577–595 (LRGY…LIAE) and 596–619 (LNVI…FSVF). Phe607 and Tyr611 together coordinate chloride. Residues 620–636 (HASLANSPGWRPSFKYY) lie on the Cytoplasmic side of the membrane. Transmembrane regions (helical) follow at residues 637-656 (NMWA…FIIN) and 657-672 (WWAA…SLYI). Topologically, residues 673–1136 (YVSYKKPDVN…NHQSVLTFYS (464 aa)) are cytoplasmic. Positions 689 to 702 (ALTYHQALTHSLQL) are scissor helix. Residues 875–921 (SKDSDGDSSKPSSKATSVQNSPAVQKDEDDDGKAHTQPLLKKDKKSP) form a disordered region. At Thr1059 the chain carries Phosphothreonine.

This sequence belongs to the SLC12A transporter family. As to quaternary structure, homodimer; adopts a domain-swap conformation at the scissor helices connecting the transmembrane domain and C-terminal domain. In terms of processing, phosphorylated at Thr-125, Thr-129 and Thr-134 by OXSR1/OSR1 and STK39/SPAK downstream of WNK kinases (WNK1, WNK2, WNK3 or WNK4), promoting its activity.

It is found in the basolateral cell membrane. It catalyses the reaction K(+)(out) + 2 chloride(out) + Na(+)(out) = K(+)(in) + 2 chloride(in) + Na(+)(in). Its activity is regulated as follows. Activated following phosphorylation by OXSR1/OSR1 and STK39/SPAK. Inhibited by bumetanide. Cation-chloride cotransporter which mediates the electroneutral transport of chloride, potassium and/or sodium ions across the membrane. Plays a vital role in the regulation of ionic balance and cell volume. Important for maintenance of endolymph volume in the otic vesicle, probably by regulating ion homeostasis. Also plays a role in normal development of the swim bladder. This is Solute carrier family 12 member 2 from Danio rerio (Zebrafish).